A 570-amino-acid polypeptide reads, in one-letter code: RNA polymerase I termination factor (570 aa).

Polar residues predominate over residues Met-1–Asn-16. Disordered regions lie at residues Met-1–Ser-21, His-37–Trp-68, and Ser-100–Lys-138. Residues His-37–Lys-56 are compositionally biased toward basic residues. Residue Thr-64 is modified to Phosphothreonine. The span at Arg-108 to Ile-137 shows a compositional bias: basic residues. One can recognise a Myb-like 1 domain in the interval Lys-273–Tyr-339. In terms of domain architecture, HTH myb-type spans His-340 to Cys-391. Positions Trp-367–Met-389 form a DNA-binding region, H-T-H motif. Myb-like domains follow at residues Gly-392–Val-486 and Ser-493–Lys-549.

As to quaternary structure, interacts with FOB1. Interacts with the RENT complex subunits NET1 and SIR2.

Its subcellular location is the nucleus. The protein localises to the nucleolus. DNA-binding protein that recognizes sequence-specific replication termini (Ter sites) within rDNA. Binds to rDNA terminator elements and mediates efficient RNA polymerase I transcription termination. Required for rDNA silencing at the non-transcribed spacer 1 (NTS1). Promotes the association of SIR2 with NTS1 and contributes to maintenance of rDNA stability. The chain is RNA polymerase I termination factor from Saccharomyces cerevisiae (strain ATCC 204508 / S288c) (Baker's yeast).